The chain runs to 231 residues: 5'-methylthioadenosine/S-adenosylhomocysteine nucleosidase (231 aa).

Catalysis depends on Glu12, which acts as the Proton acceptor. Substrate is bound by residues Gly78, Met153, and 174–175; that span reads ME. Catalysis depends on Asp198, which acts as the Proton donor.

Belongs to the PNP/UDP phosphorylase family. MtnN subfamily.

The enzyme catalyses S-adenosyl-L-homocysteine + H2O = S-(5-deoxy-D-ribos-5-yl)-L-homocysteine + adenine. It carries out the reaction S-methyl-5'-thioadenosine + H2O = 5-(methylsulfanyl)-D-ribose + adenine. It catalyses the reaction 5'-deoxyadenosine + H2O = 5-deoxy-D-ribose + adenine. The protein operates within amino-acid biosynthesis; L-methionine biosynthesis via salvage pathway; S-methyl-5-thio-alpha-D-ribose 1-phosphate from S-methyl-5'-thioadenosine (hydrolase route): step 1/2. Its function is as follows. Catalyzes the irreversible cleavage of the glycosidic bond in both 5'-methylthioadenosine (MTA) and S-adenosylhomocysteine (SAH/AdoHcy) to adenine and the corresponding thioribose, 5'-methylthioribose and S-ribosylhomocysteine, respectively. Also cleaves 5'-deoxyadenosine, a toxic by-product of radical S-adenosylmethionine (SAM) enzymes, into 5-deoxyribose and adenine. The protein is 5'-methylthioadenosine/S-adenosylhomocysteine nucleosidase of Bacillus velezensis (strain DSM 23117 / BGSC 10A6 / LMG 26770 / FZB42) (Bacillus amyloliquefaciens subsp. plantarum).